A 309-amino-acid chain; its full sequence is MPDTKIVLIAGPTASGKSALALKMARETGGEIVNADSMQIYGGLPVLTAAPSPEELAQAPHHLFGAVDAADAWSVGKWLAAATAVLDDIAARDRTAIVVGGTGLYFRALTHGLADIPPVSETQREVSALLYAAQGEPEFRDVLAALDPEAEARIEIGDRQRLLRAHAVAIATGKSLTAWQTDTKPTLADGTWTGLVLDPPRAQLYDRCDARLGLMVERGALDEVRAMEARGLEPALPALKALGYRELAAHLRGETSLDQALDAARQETRRYAKRQMTWFRNQTPDWERVETLAPYGSLRDRLPPEGEEP.

11-18 serves as a coordination point for ATP; sequence GPTASGKS. Position 13–18 (13–18) interacts with substrate; sequence TASGKS. 2 interaction with substrate tRNA regions span residues 36–39 and 160–164; these read DSMQ and QRLLR.

This sequence belongs to the IPP transferase family. In terms of assembly, monomer. Mg(2+) serves as cofactor.

The enzyme catalyses adenosine(37) in tRNA + dimethylallyl diphosphate = N(6)-dimethylallyladenosine(37) in tRNA + diphosphate. Functionally, catalyzes the transfer of a dimethylallyl group onto the adenine at position 37 in tRNAs that read codons beginning with uridine, leading to the formation of N6-(dimethylallyl)adenosine (i(6)A). This chain is tRNA dimethylallyltransferase, found in Caulobacter sp. (strain K31).